We begin with the raw amino-acid sequence, 493 residues long: Ketol-acid reductoisomerase (NADP(+)) (493 aa).

The 194-residue stretch at alanine 15–serine 208 folds into the KARI N-terminal Rossmann domain. NADP(+) contacts are provided by residues cysteine 45–glutamine 48, arginine 68, arginine 76, serine 78, and aspartate 108–glutamine 110. Residue histidine 132 is part of the active site. Glycine 158 serves as a coordination point for NADP(+). KARI C-terminal knotted domains are found at residues serine 209–alanine 344 and phenylalanine 345–methionine 486. Positions 217, 221, 389, and 393 each coordinate Mg(2+). Serine 414 provides a ligand contact to substrate.

It belongs to the ketol-acid reductoisomerase family. The cofactor is Mg(2+).

It catalyses the reaction (2R)-2,3-dihydroxy-3-methylbutanoate + NADP(+) = (2S)-2-acetolactate + NADPH + H(+). The catalysed reaction is (2R,3R)-2,3-dihydroxy-3-methylpentanoate + NADP(+) = (S)-2-ethyl-2-hydroxy-3-oxobutanoate + NADPH + H(+). Its pathway is amino-acid biosynthesis; L-isoleucine biosynthesis; L-isoleucine from 2-oxobutanoate: step 2/4. It participates in amino-acid biosynthesis; L-valine biosynthesis; L-valine from pyruvate: step 2/4. Functionally, involved in the biosynthesis of branched-chain amino acids (BCAA). Catalyzes an alkyl-migration followed by a ketol-acid reduction of (S)-2-acetolactate (S2AL) to yield (R)-2,3-dihydroxy-isovalerate. In the isomerase reaction, S2AL is rearranged via a Mg-dependent methyl migration to produce 3-hydroxy-3-methyl-2-ketobutyrate (HMKB). In the reductase reaction, this 2-ketoacid undergoes a metal-dependent reduction by NADPH to yield (R)-2,3-dihydroxy-isovalerate. The chain is Ketol-acid reductoisomerase (NADP(+)) from Aeromonas hydrophila subsp. hydrophila (strain ATCC 7966 / DSM 30187 / BCRC 13018 / CCUG 14551 / JCM 1027 / KCTC 2358 / NCIMB 9240 / NCTC 8049).